The following is an 86-amino-acid chain: DNA-directed RNA polymerase subunit omega (86 aa).

Belongs to the RNA polymerase subunit omega family. In terms of assembly, the RNAP catalytic core consists of 2 alpha, 1 beta, 1 beta' and 1 omega subunit. When a sigma factor is associated with the core the holoenzyme is formed, which can initiate transcription.

The enzyme catalyses RNA(n) + a ribonucleoside 5'-triphosphate = RNA(n+1) + diphosphate. In terms of biological role, promotes RNA polymerase assembly. Latches the N- and C-terminal regions of the beta' subunit thereby facilitating its interaction with the beta and alpha subunits. The polypeptide is DNA-directed RNA polymerase subunit omega (Psychrobacter arcticus (strain DSM 17307 / VKM B-2377 / 273-4)).